The sequence spans 304 residues: Protoheme IX farnesyltransferase (304 aa).

9 consecutive transmembrane segments (helical) span residues 32-52 (VVAL…PGSV), 54-74 (LQPL…AAAF), 104-124 (ALTF…TLVN), 126-146 (LTAW…TAYL), 154-174 (IVVG…SVTG), 180-200 (ALLL…ALAI), 226-246 (CILL…LVGM), 247-267 (CGPV…YKAW), and 284-304 (FSIY…YLWV).

This sequence belongs to the UbiA prenyltransferase family. Protoheme IX farnesyltransferase subfamily.

It is found in the cell inner membrane. The enzyme catalyses heme b + (2E,6E)-farnesyl diphosphate + H2O = Fe(II)-heme o + diphosphate. The protein operates within porphyrin-containing compound metabolism; heme O biosynthesis; heme O from protoheme: step 1/1. Converts heme B (protoheme IX) to heme O by substitution of the vinyl group on carbon 2 of heme B porphyrin ring with a hydroxyethyl farnesyl side group. This chain is Protoheme IX farnesyltransferase, found in Shewanella sediminis (strain HAW-EB3).